The primary structure comprises 433 residues: Ribosome biogenesis protein WDR12 homolog (433 aa).

Methionine 1 carries the N-acetylmethionine modification. The tract at residues 12-96 (LHVKFVTKLD…ERTLEIEYIR (85 aa)) is ubiquitin-like (UBL) domain. WD repeat units lie at residues 108–146 (LHDD…SHIL), 148–191 (GHSG…SVDS), 203–242 (GHKA…SEGE), 270–308 (GHTQ…DSLN), 310–350 (FCGK…TSAP), 356–396 (SHSS…PLSV), and 399–433 (THND…IAIS). Residues 238–263 (TSEGESVSVKKRKGNNQAEESQSEGE) are disordered.

The protein belongs to the WD repeat WDR12/YTM1 family. In terms of assembly, interacts with PES. Interacts with BOP1.

It localises to the nucleus. The protein localises to the nucleolus. It is found in the nucleoplasm. Required for maturation of ribosomal RNAs and formation of the large ribosomal subunit. The protein is Ribosome biogenesis protein WDR12 homolog of Arabidopsis thaliana (Mouse-ear cress).